Consider the following 252-residue polypeptide: T-box transcription factor mls-1 (252 aa).

The segment at residues 40-210 is a DNA-binding region (T-box); sequence LWRRFHNLGT…SNPFAKGFRE (171 aa).

May interact with unc-37.

It localises to the nucleus. Functionally, probable transcription factor required for the cell fate specification of non-striated uterine muscle precursor cells. Furthermore, may function with the transcriptional corepressor unc-37. This chain is T-box transcription factor mls-1, found in Caenorhabditis elegans.